We begin with the raw amino-acid sequence, 627 residues long: Mitochondrial Rho GTPase 1 (627 aa).

In terms of domain architecture, Miro 1 spans 1–169; sequence MATVRICVCG…FFLCQKAVTH (169 aa). Residues 1–599 lie on the Cytoplasmic side of the membrane; it reads MATVRICVCG…PRSNEEGPDR (599 aa). Residues 10–17, 58–62, and 114–117 each bind GTP; these read GDESTGKS, DTSAR, and NKSD. 2 EF-hand domains span residues 185-220 and 305-340; these read LCINALKRIFYLCDKDQDGYLNEQEMRDFQARCFDK and AGYRFFVDLFLIFDKDNDGGLNDEELEALFAPAPGL. Aspartate 198, aspartate 200, aspartate 202, tyrosine 204, glutamate 209, aspartate 318, aspartate 320, aspartate 322, and glutamate 329 together coordinate Ca(2+). One can recognise a Miro 2 domain in the interval 420–584; that stretch reads RNVVLCYVLG…FVAYADAATT (165 aa). Residues 429–436, 465–469, and 534–537 contribute to the GTP site; these read GASGAGKS, ELPGG, and LKAD. The helical; Anchor for type IV membrane protein transmembrane segment at 600–620 threads the bilayer; that stretch reads TSLYIALGATACAGVAALTIW. At 621–627 the chain is on the mitochondrial intermembrane side; the sequence is RRATNAL.

The protein belongs to the mitochondrial Rho GTPase family.

The protein localises to the mitochondrion outer membrane. Functionally, mitochondrial GTPase involved in mitochondrial trafficking. Probably involved in control of anterograde transport of mitochondria and their subcellular distribution. The polypeptide is Mitochondrial Rho GTPase 1 (GEM1) (Gibberella zeae (strain ATCC MYA-4620 / CBS 123657 / FGSC 9075 / NRRL 31084 / PH-1) (Wheat head blight fungus)).